The following is a 368-amino-acid chain: tRNA 2-selenouridine synthase (368 aa).

In terms of domain architecture, Rhodanese spans 12 to 136 (FLGDAPLLDT…MRGFLLETIE (125 aa)). Catalysis depends on cysteine 95, which acts as the S-selanylcysteine intermediate.

Belongs to the SelU family. In terms of assembly, monomer.

It catalyses the reaction 5-methylaminomethyl-2-thiouridine(34) in tRNA + selenophosphate + (2E)-geranyl diphosphate + H2O + H(+) = 5-methylaminomethyl-2-selenouridine(34) in tRNA + (2E)-thiogeraniol + phosphate + diphosphate. The catalysed reaction is 5-methylaminomethyl-2-thiouridine(34) in tRNA + (2E)-geranyl diphosphate = 5-methylaminomethyl-S-(2E)-geranyl-thiouridine(34) in tRNA + diphosphate. It carries out the reaction 5-methylaminomethyl-S-(2E)-geranyl-thiouridine(34) in tRNA + selenophosphate + H(+) = 5-methylaminomethyl-2-(Se-phospho)selenouridine(34) in tRNA + (2E)-thiogeraniol. The enzyme catalyses 5-methylaminomethyl-2-(Se-phospho)selenouridine(34) in tRNA + H2O = 5-methylaminomethyl-2-selenouridine(34) in tRNA + phosphate. Its function is as follows. Involved in the post-transcriptional modification of the uridine at the wobble position (U34) of tRNA(Lys), tRNA(Glu) and tRNA(Gln). Catalyzes the conversion of 2-thiouridine (S2U-RNA) to 2-selenouridine (Se2U-RNA). Acts in a two-step process involving geranylation of 2-thiouridine (S2U) to S-geranyl-2-thiouridine (geS2U) and subsequent selenation of the latter derivative to 2-selenouridine (Se2U) in the tRNA chain. The protein is tRNA 2-selenouridine synthase of Bordetella bronchiseptica (strain ATCC BAA-588 / NCTC 13252 / RB50) (Alcaligenes bronchisepticus).